The sequence spans 373 residues: Nuclear hormone receptor family member nhr-69 (373 aa).

Positions glutamate 3–asparagine 78 form a DNA-binding region, nuclear receptor. 2 consecutive NR C4-type zinc fingers follow at residues cysteine 6–cysteine 26 and cysteine 42–cysteine 66. The region spanning glutamate 93–aspartate 344 is the NR LBD domain.

Belongs to the nuclear hormone receptor family. In terms of assembly, interacts with R-SMAD daf-8. Expressed in the ASI neurons, hypodermis, and in tail neurons.

It localises to the nucleus. In terms of biological role, orphan nuclear receptor which, in cooperation with R-SMAD daf-8, modulates the Insulin/IGF-1-like signaling (IIS) pathway, perhaps by regulating expression of the potassium channel exp-2, which in turn modulates the secretion of insulin-like peptide daf-28. The chain is Nuclear hormone receptor family member nhr-69 (nhr-69) from Caenorhabditis elegans.